We begin with the raw amino-acid sequence, 311 residues long: Phosphoglycerate mutase 2 (311 aa).

Substrate is bound by residues 16–23 (RHGQSELN), 29–30 (CG), Arg73, 126–129 (ERHY), Lys137, 153–154 (RR), and 243–244 (GS). His17 acts as the Tele-phosphohistidine intermediate in catalysis. Glu126 (proton donor/acceptor) is an active-site residue.

Belongs to the phosphoglycerate mutase family. BPG-dependent PGAM subfamily.

The protein resides in the cytoplasm. It carries out the reaction (2R)-2-phosphoglycerate = (2R)-3-phosphoglycerate. It participates in carbohydrate degradation; glycolysis; pyruvate from D-glyceraldehyde 3-phosphate: step 3/5. Functionally, could be non-functional. This Saccharomyces cerevisiae (strain ATCC 204508 / S288c) (Baker's yeast) protein is Phosphoglycerate mutase 2 (GPM2).